The primary structure comprises 191 residues: MICNARQKEKGGKPTGLEYLEVGSRVRDDESKRNKVKVDEDHGLYEFFRHKDKALSTPAEEGNHGRPWSAEELRGKSWEDLHSLWWICCKERNRIATESYERDRLEAGYGEEDSEKRDMTVRRTQRAIKQVLTERYYSWQEAQVVAKDDPEIDLSGQGPIYTPRDFEEDIEEEVLAESEGEVEQKPAQITA.

The protein belongs to the universal ribosomal protein uL29 family. In terms of assembly, component of the mitochondrial large ribosomal subunit. Mature mitochondrial ribosomes consist of a small (37S) and a large (54S) subunit. The 37S subunit contains at least 33 different proteins and 1 molecule of RNA (15S). The 54S subunit contains at least 45 different proteins and 1 molecule of RNA (21S).

It is found in the mitochondrion. This is Large ribosomal subunit protein uL29m (MRPL4) from Sclerotinia sclerotiorum (strain ATCC 18683 / 1980 / Ss-1) (White mold).